Here is a 955-residue protein sequence, read N- to C-terminus: Reversion-inducing cysteine-rich protein with Kazal motifs (955 aa).

Positions 1-22 (MSGCLQILTVLLCCRFWALVFS) are cleaved as a signal peptide. One copy of the Knot 1 repeat lies at 28–75 (CVHHAADIPRCRDACEQLASIRSESRLRHLLHRLPSYCPETLSELWIC). The segment at 28-326 (CVHHAADIPR…NPVEMDLITC (299 aa)) is 5 X Knot repeats. N-linked (GlcNAc...) asparagine glycosylation occurs at Asn77. 2 Knot repeats span residues 95–132 (CCEL…LYSC) and 142–188 (CCSY…LILC). Asn191 carries an N-linked (GlcNAc...) asparagine glycan. Knot repeat units follow at residues 207–254 (CCDR…LWQC) and 282–326 (CCFK…LITC). N-linked (GlcNAc...) asparagine glycans are attached at residues Asn287 and Asn375. Kazal-like domains follow at residues 615-661 (LFTG…SCRS), 686-741 (DLSE…HCQD), and 742-778 (ACRR…RCHA). Disulfide bonds link Cys621-Cys646, Cys623-Cys642, Cys631-Cys659, Cys704-Cys724, and Cys713-Cys739. The GPI-anchor amidated serine moiety is linked to residue Ser931. The propeptide occupies 932–955 (SCVSISVCVLLLLCSLILTLTSDL).

This sequence belongs to the RECK family. Interacts (via knot repeats) with wnt7a (via disordered linker region); the interaction is direct. Interacts (via knot repeats) with wnt7b (via disordered linker region); the interaction is direct. Interacts with adgra2; the interaction is direct. As to expression, expressed in the cerebral endothelium.

The protein localises to the cell membrane. Its function is as follows. Functions together with adgra2 to enable brain endothelial cells to selectively respond to Wnt7 signals (wnt7a or wnt7b). Plays a key role in Wnt7-specific responses: required for central nervous system (CNS) angiogenesis and blood-brain barrier regulation. Acts as a Wnt7-specific coactivator of canonical Wnt signaling by decoding Wnt ligands: acts by interacting specifically with the disordered linker region of Wnt7, thereby conferring ligand selectivity for Wnt7. Adgra2 is then required to deliver reck-bound Wnt7 to frizzled by assembling a higher-order RECK-ADGRA2-Fzd-LRP5-LRP6 complex. Also acts as a serine protease inhibitor. This chain is Reversion-inducing cysteine-rich protein with Kazal motifs, found in Danio rerio (Zebrafish).